Here is a 258-residue protein sequence, read N- to C-terminus: C1q-related factor (258 aa).

The first 16 residues, 1–16 (MLLVLVVLIPVLVSSG), serve as a signal peptide directing secretion. Residues 39–120 (GPGAGARSDG…PGSGGSGAIS (82 aa)) are disordered. A compositionally biased stretch (low complexity) spans 67-77 (GPQGKPGRTGK). The 49-residue stretch at 67-115 (GPQGKPGRTGKPGPPGPPGDRGPPGPVGPPGEKGEPGKPGPPGLPGSGG) folds into the Collagen-like domain. The span at 78–95 (PGPPGPPGDRGPPGPVGP) shows a compositional bias: pro residues. Residues 125–258 (TTVPRVAFYA…TFSGFIIYSD (134 aa)) form the C1q domain.

Interacts with ADGRB3. Forms heterooligomers with C1QL4, when proteins are coexpressed; this interaction does not occur after secretion. As to expression, expressed in brainstem. More abundant in areas of the nervous system involved in motor function, such as the Purkinje cells of the cerebellum, the accessory olivary nucleus, the pons and the red nucleus.

Its subcellular location is the secreted. Functionally, may regulate the number of excitatory synapses that are formed on hippocampus neurons. Has no effect on inhibitory synapses. The protein is C1q-related factor (C1ql1) of Mus musculus (Mouse).